Reading from the N-terminus, the 343-residue chain is N-acetyl-gamma-glutamyl-phosphate reductase (343 aa).

The active site involves C152.

This sequence belongs to the NAGSA dehydrogenase family. Type 1 subfamily.

It localises to the cytoplasm. It carries out the reaction N-acetyl-L-glutamate 5-semialdehyde + phosphate + NADP(+) = N-acetyl-L-glutamyl 5-phosphate + NADPH + H(+). The protein operates within amino-acid biosynthesis; L-arginine biosynthesis; N(2)-acetyl-L-ornithine from L-glutamate: step 3/4. In terms of biological role, catalyzes the NADPH-dependent reduction of N-acetyl-5-glutamyl phosphate to yield N-acetyl-L-glutamate 5-semialdehyde. The polypeptide is N-acetyl-gamma-glutamyl-phosphate reductase (Methanopyrus kandleri (strain AV19 / DSM 6324 / JCM 9639 / NBRC 100938)).